A 291-amino-acid polypeptide reads, in one-letter code: 11-beta-hydroxysteroid dehydrogenase 1 (291 aa).

The Cytoplasmic segment spans residues 1–7 (MAFMKTH). Residues 8–24 (LLPILGLFMAYYYYSAY) traverse the membrane as a helical; Signal-anchor for type II membrane protein segment. Topologically, residues 25–291 (EEFRPEMLQG…TSYSTDGLIN (267 aa)) are lumenal. NADP(+) is bound by residues 41–67 (GASKGIGREMAYHLAKMGAHVVVTARS), 92–93 (TM), and 119–121 (NHI). 2 N-linked (GlcNAc...) asparagine glycosylation sites follow: Asn123 and Asn162. Ser170 lines the substrate pocket. The Proton acceptor role is filled by Tyr183. NADP(+) is bound at residue 183–187 (YSASK). The N-linked (GlcNAc...) asparagine glycan is linked to Asn207. 218 to 222 (IDTDT) contributes to the NADP(+) binding site.

It belongs to the short-chain dehydrogenases/reductases (SDR) family. As to quaternary structure, homodimer. Abundantly expressed in the liver, followed by fibroblasts, also detected in the brain, lung, heart, and ovary, and in smaller amounts in kidney, skin, and spleen.

Its subcellular location is the endoplasmic reticulum membrane. It catalyses the reaction an 11beta-hydroxysteroid + NADP(+) = an 11-oxosteroid + NADPH + H(+). It carries out the reaction cortisone + NADPH + H(+) = cortisol + NADP(+). The catalysed reaction is corticosterone + NADP(+) = 11-dehydrocorticosterone + NADPH + H(+). The enzyme catalyses a 7beta-hydroxysteroid + NADP(+) = a 7-oxosteroid + NADPH + H(+). It catalyses the reaction 7-oxocholesterol + NADPH + H(+) = 7beta-hydroxycholesterol + NADP(+). It carries out the reaction chenodeoxycholate + NADP(+) = 7-oxolithocholate + NADPH + H(+). The catalysed reaction is 7-oxolithocholate + NADPH + H(+) = ursodeoxycholate + NADP(+). The enzyme catalyses glycochenodeoxycholate + NADP(+) = 7-oxoglycolithocholate + NADPH + H(+). It catalyses the reaction taurochenodeoxycholate + NADP(+) = 7-oxotaurolithocholate + NADPH + H(+). It carries out the reaction tauroursodeoxycholate + NADP(+) = 7-oxotaurolithocholate + NADPH + H(+). The catalysed reaction is glycoursodeoxycholate + NADP(+) = 7-oxoglycolithocholate + NADPH + H(+). The enzyme catalyses 7-oxopregnenolone + NADPH + H(+) = 7beta-hydroxypregnenolone + NADP(+). It catalyses the reaction 3beta,7alpha-dihydroxyandrost-5-en-17-one + NADP(+) = 3beta-hydroxy-5-androstene-7,17-dione + NADPH + H(+). It carries out the reaction 3beta-hydroxy-5-androstene-7,17-dione + NADPH + H(+) = 3beta,7beta-dihydroxyandrost-5-en-17-one + NADP(+). The catalysed reaction is 3beta-hydroxy-5alpha-androstane-7,17-dione + NADPH + H(+) = 3beta,7beta-dihydroxy-5alpha-androstan-17-one + NADP(+). Its pathway is steroid metabolism. Controls the reversible conversion of biologically active glucocorticoids such as cortisone to cortisol, and 11-dehydrocorticosterone to corticosterone in the presence of NADP(H). Participates in the corticosteroid receptor-mediated anti-inflammatory response, as well as metabolic and homeostatic processes. Bidirectional in vitro, predominantly functions as a reductase in vivo, thereby increasing the concentration of active glucocorticoids. It has broad substrate specificity, besides glucocorticoids, it accepts other steroid and sterol substrates. Interconverts 7-oxo- and 7-hydroxy-neurosteroids such as 7-oxopregnenolone and 7beta-hydroxypregnenolone, 7-oxodehydroepiandrosterone (3beta-hydroxy-5-androstene-7,17-dione) and 7beta-hydroxydehydroepiandrosterone (3beta,7beta-dihydroxyandrost-5-en-17-one), among others. Catalyzes the stereo-specific conversion of the major dietary oxysterol, 7-ketocholesterol (7-oxocholesterol), into the more polar 7-beta-hydroxycholesterol metabolite. 7-oxocholesterol is one of the most important oxysterols, it participates in several events such as induction of apoptosis, accumulation in atherosclerotic lesions, lipid peroxidation, and induction of foam cell formation. Mediates the 7-oxo reduction of 7-oxolithocholate mainly to chenodeoxycholate, and to a lesser extent to ursodeoxycholate, both in its free form and when conjugated to glycine or taurine, providing a link between glucocorticoid activation and bile acid metabolism. Catalyzes the synthesis of 7-beta-25-dihydroxycholesterol from 7-oxo-25-hydroxycholesterol in vitro, which acts as a ligand for the G-protein-coupled receptor (GPCR) Epstein-Barr virus-induced gene 2 (EBI2) and may thereby regulate immune cell migration. The polypeptide is 11-beta-hydroxysteroid dehydrogenase 1 (HSD11B1) (Saimiri sciureus (Common squirrel monkey)).